We begin with the raw amino-acid sequence, 600 residues long: QTTEILLCLSPVEVASLKEGINFFRNKSTGKDYILYKNKSRLRACKNMCKHQGGLFIKDIEDLAGRSVRCTKHNWKLDVSTMKYINPPESFCQDELVVEMDENNRLLLLELNPPNPWDLQPRSPEELAFGEVQITYLTHACMDLKLGDKRMVFDPWLIGPAFARGWWLLHEPPSDWLERLCQADLIYISHLHSDHLSYPTLKKLAGRRPDIPIYVGNTERPVFWNLNQSGVQLTNINVMPFGIWQQVDKNLRFMILMDGVHPEMDTCIIVEYKGHKILNTVDCTRPNGGRLPMKVALMMSDFAGGASGFPMTFSGGKFTEEWKAQFIKTERKKLLNYKARLVKNLQPRIYCPFAGYFVESHPSDKYIKETNTKNDPNELNNLIKKNSDVITWTPRPGATLDLGRMLKDPTDSKGIIEPPEGTKIYKDSWDFEPYLEILNAAVGDEIFLHSSWIKEYFTWAGFKDYNLVVRMIETDEDFNPFPGGYDYLVDFLDLSFPKERPQREHPYEEIHSRVDVIRHVVKNGLLWDELYIGFQTRLQRDPDIYHHLFWNHFQIKLPLTPPNWKSFLMCCEQNGPGILQFSTERTNEPNRNKFSVENKA.

The region spanning 9–107 (LSPVEVASLK…VEMDENNRLL (99 aa)) is the Rieske domain. Positions 49, 51, 70, and 73 each coordinate [2Fe-2S] cluster.

This sequence belongs to the CMP-Neu5Ac hydroxylase family. It depends on [2Fe-2S] cluster as a cofactor.

The protein localises to the cytoplasm. The catalysed reaction is CMP-N-acetyl-beta-neuraminate + 2 Fe(II)-[cytochrome b5] + O2 + 2 H(+) = CMP-N-glycoloyl-beta-neuraminate + 2 Fe(III)-[cytochrome b5] + H2O. Its pathway is amino-sugar metabolism; N-acetylneuraminate metabolism. Its function is as follows. Sialic acids are components of carbohydrate chains of glycoconjugates and are involved in cell-cell recognition and cell-pathogen interactions. Catalyzes the conversion of CMP-N-acetylneuraminic acid (CMP-Neu5Ac) into its hydroxylated derivative CMP-N-glycolylneuraminic acid (CMP-Neu5Gc), a sialic acid abundantly expressed at the surface of many cells. This chain is Cytidine monophosphate-N-acetylneuraminic acid hydroxylase (CMAH), found in Gorilla gorilla gorilla (Western lowland gorilla).